Reading from the N-terminus, the 111-residue chain is Large ribosomal subunit protein eL30 (111 aa).

This sequence belongs to the eukaryotic ribosomal protein eL30 family.

The polypeptide is Large ribosomal subunit protein eL30 (RPL30) (Oryza sativa subsp. japonica (Rice)).